The sequence spans 506 residues: 2,3-bisphosphoglycerate-independent phosphoglycerate mutase (506 aa).

Mn(2+)-binding residues include Asp12 and Ser63. Ser63 functions as the Phosphoserine intermediate in the catalytic mechanism. Residues His122, 151–152 (RD), Arg182, Arg188, 253–256 (RADR), and Lys323 contribute to the substrate site. Mn(2+) is bound by residues Asp390, His394, Asp432, His433, and His451.

It belongs to the BPG-independent phosphoglycerate mutase family. Monomer. It depends on Mn(2+) as a cofactor.

The enzyme catalyses (2R)-2-phosphoglycerate = (2R)-3-phosphoglycerate. It participates in carbohydrate degradation; glycolysis; pyruvate from D-glyceraldehyde 3-phosphate: step 3/5. Functionally, catalyzes the interconversion of 2-phosphoglycerate and 3-phosphoglycerate. This chain is 2,3-bisphosphoglycerate-independent phosphoglycerate mutase, found in Wolbachia pipientis wMel.